We begin with the raw amino-acid sequence, 222 residues long: Ribonuclease HII (222 aa).

The RNase H type-2 domain maps to 17 to 206; the sequence is DLVAGVDEVG…VRAAHEARAS (190 aa). Aspartate 23, glutamate 24, and aspartate 115 together coordinate a divalent metal cation.

This sequence belongs to the RNase HII family. Requires Mn(2+) as cofactor. Mg(2+) serves as cofactor.

It is found in the cytoplasm. The catalysed reaction is Endonucleolytic cleavage to 5'-phosphomonoester.. In terms of biological role, endonuclease that specifically degrades the RNA of RNA-DNA hybrids. This is Ribonuclease HII from Pseudomonas savastanoi pv. phaseolicola (strain 1448A / Race 6) (Pseudomonas syringae pv. phaseolicola (strain 1448A / Race 6)).